The primary structure comprises 375 residues: Erythronate-4-phosphate dehydrogenase (375 aa).

Residues Ser-45 and Thr-66 each coordinate substrate. NAD(+) contacts are provided by Asp-146 and Thr-175. Residue Arg-208 is part of the active site. Position 232 (Asp-232) interacts with NAD(+). The active site involves Glu-237. Residue His-254 is the Proton donor of the active site. An NAD(+)-binding site is contributed by Gly-257. Tyr-258 provides a ligand contact to substrate.

The protein belongs to the D-isomer specific 2-hydroxyacid dehydrogenase family. PdxB subfamily. Homodimer.

The protein localises to the cytoplasm. It carries out the reaction 4-phospho-D-erythronate + NAD(+) = (R)-3-hydroxy-2-oxo-4-phosphooxybutanoate + NADH + H(+). It functions in the pathway cofactor biosynthesis; pyridoxine 5'-phosphate biosynthesis; pyridoxine 5'-phosphate from D-erythrose 4-phosphate: step 2/5. Catalyzes the oxidation of erythronate-4-phosphate to 3-hydroxy-2-oxo-4-phosphonooxybutanoate. This is Erythronate-4-phosphate dehydrogenase from Yersinia enterocolitica serotype O:8 / biotype 1B (strain NCTC 13174 / 8081).